A 422-amino-acid chain; its full sequence is Enolase (422 aa).

Gln-161 is a binding site for (2R)-2-phosphoglycerate. Residue Glu-203 is the Proton donor of the active site. Mg(2+) is bound by residues Asp-240, Glu-283, and Asp-310. The (2R)-2-phosphoglycerate site is built by Lys-335, Arg-364, Ser-365, and Lys-386. Lys-335 (proton acceptor) is an active-site residue.

Belongs to the enolase family. Mg(2+) is required as a cofactor.

The protein localises to the cytoplasm. It is found in the secreted. It localises to the cell surface. The catalysed reaction is (2R)-2-phosphoglycerate = phosphoenolpyruvate + H2O. Its pathway is carbohydrate degradation; glycolysis; pyruvate from D-glyceraldehyde 3-phosphate: step 4/5. In terms of biological role, catalyzes the reversible conversion of 2-phosphoglycerate (2-PG) into phosphoenolpyruvate (PEP). It is essential for the degradation of carbohydrates via glycolysis. The chain is Enolase from Deinococcus deserti (strain DSM 17065 / CIP 109153 / LMG 22923 / VCD115).